Consider the following 81-residue polypeptide: Large ribosomal subunit protein bL27 (81 aa).

A disordered region spans residues 1–22 (MAHKTGQSSSSNGRESKSKRLG).

This sequence belongs to the bacterial ribosomal protein bL27 family.

This chain is Large ribosomal subunit protein bL27, found in Opitutus terrae (strain DSM 11246 / JCM 15787 / PB90-1).